The sequence spans 54 residues: VATVDCSDYPKPACTLEYMPLCGSDNKTYGNKCNFCNAVVDSNGTLTLSHFGKC.

The region spanning 4-54 is the Kazal-like domain; sequence VDCSDYPKPACTLEYMPLCGSDNKTYGNKCNFCNAVVDSNGTLTLSHFGKC. 3 disulfides stabilise this stretch: Cys6-Cys36, Cys14-Cys33, and Cys22-Cys54. N-linked (GlcNAc...) asparagine glycosylation occurs at Asn43.

It is found in the secreted. This Dendrocygna arcuata (Wandering whistling-duck) protein is Ovomucoid.